Here is a 364-residue protein sequence, read N- to C-terminus: MKINGTPFRSIWCEAGEVRIIDQRWLPHELRIVPLRTRAEFAAAIRDMWVRGAPLIGATAAWGMAVQMAEDPSDASLAETWQVLHETRPTAINLRWALNEMRRLLAPLPPSERAAAAARRAAEICDEDVEINRRIGAHGLTLIREIAERKRGRVNILTHCNAGWLATVDWGTATSPIYHALEAGIDVHVFVDETRPRNQGALLTAWEMNSHGVSHDLIVDNAGGHLMQHGEVDLVIVGTDRTTAQGDVCNKIGTYLKALAAKANGVPFYVALPSPTIDWTVRDGVAEIPIEERSSAEVTHVQGKAPDGSVISVQISPDGTGARNPAFDVTPASLVTGLITERGICAAEAGAMEALFPEAARSAA.

Substrate is bound by residues 51–53 (RGA), arginine 88, and glutamine 199. The active-site Proton donor is aspartate 240. A substrate-binding site is contributed by 250–251 (NK).

This sequence belongs to the eIF-2B alpha/beta/delta subunits family. MtnA subfamily.

The enzyme catalyses 5-(methylsulfanyl)-alpha-D-ribose 1-phosphate = 5-(methylsulfanyl)-D-ribulose 1-phosphate. Its pathway is amino-acid biosynthesis; L-methionine biosynthesis via salvage pathway; L-methionine from S-methyl-5-thio-alpha-D-ribose 1-phosphate: step 1/6. Functionally, catalyzes the interconversion of methylthioribose-1-phosphate (MTR-1-P) into methylthioribulose-1-phosphate (MTRu-1-P). The polypeptide is Methylthioribose-1-phosphate isomerase (Cereibacter sphaeroides (strain KD131 / KCTC 12085) (Rhodobacter sphaeroides)).